An 887-amino-acid polypeptide reads, in one-letter code: Beta-galactosidase 14 (887 aa).

The signal sequence occupies residues 1 to 31; sequence MSKSSRIRMKSRTRYLIAILLVISLCSKASS. Glu197 acts as the Proton donor in catalysis. Glu268 (nucleophile) is an active-site residue. Residues Asn269, Asn300, Asn395, and Asn785 are each glycosylated (N-linked (GlcNAc...) asparagine). Positions 752–838 constitute an SUEL-type lectin domain; sequence KDMRLKAVMR…KTLAVQVKCE (87 aa). The segment covering 838–852 has biased composition (basic and acidic residues); that stretch reads EKKEGKQDEKKKKED. The tract at residues 838–887 is disordered; sequence EKKEGKQDEKKKKEDKDEEEEDDEDDDEEEEEEDKENKDTKDMENKNQDM. Residues 853-871 are compositionally biased toward acidic residues; that stretch reads KDEEEEDDEDDDEEEEEED. Residues 872-887 are compositionally biased toward basic and acidic residues; it reads KENKDTKDMENKNQDM.

This sequence belongs to the glycosyl hydrolase 35 family.

It is found in the secreted. The protein localises to the extracellular space. It localises to the apoplast. The catalysed reaction is Hydrolysis of terminal non-reducing beta-D-galactose residues in beta-D-galactosides.. This is Beta-galactosidase 14 (BGAL14) from Arabidopsis thaliana (Mouse-ear cress).